The chain runs to 216 residues: Adenylate kinase (216 aa).

Residue 13 to 18 (GAGKGT) coordinates ATP. An NMP region spans residues 33-66 (TTGDALRANKDMDISDMDTEYDTPREYMEAGDLV). AMP contacts are provided by residues Thr-34, Arg-39, 64–66 (DLV), 89–92 (GYPR), and Gln-96. The segment at 125 to 162 (GRRVCDDCGTNYHVEFNQPEEDGVCDECGGDLIQRDDD) is LID. Position 126 (Arg-126) interacts with ATP. Residues Cys-129, Cys-132, Cys-149, and Cys-152 each coordinate Zn(2+). AMP is bound by residues Arg-159 and Arg-170. Gln-198 contributes to the ATP binding site.

It belongs to the adenylate kinase family. As to quaternary structure, monomer.

It localises to the cytoplasm. The enzyme catalyses AMP + ATP = 2 ADP. Its pathway is purine metabolism; AMP biosynthesis via salvage pathway; AMP from ADP: step 1/1. Its function is as follows. Catalyzes the reversible transfer of the terminal phosphate group between ATP and AMP. Plays an important role in cellular energy homeostasis and in adenine nucleotide metabolism. The polypeptide is Adenylate kinase (Haloarcula marismortui (strain ATCC 43049 / DSM 3752 / JCM 8966 / VKM B-1809) (Halobacterium marismortui)).